The following is a 28-amino-acid chain: Gamma-conotoxin-like de7a (28 aa).

3 cysteine pairs are disulfide-bonded: Cys2/Cys18, Cys9/Cys22, and Cys17/Cys27. Position 4 is a 4-hydroxyproline (Pro4). Residues Glu13 and Glu16 each carry the 4-carboxyglutamate modification. A Serine amide modification is found at Ser28.

The protein belongs to the conotoxin O1 superfamily. Expressed by the venom duct.

The protein localises to the secreted. In terms of biological role, gamma-conotoxins may act on voltage-gated non-specific cation pacemaker channels (HCN). The protein is Gamma-conotoxin-like de7a of Conasprella delessertii (Sozon's cone).